The primary structure comprises 444 residues: Docking protein 3 (444 aa).

The PH domain occupies 7–123; sequence PVKDGILYQQ…WVDPICQLAF (117 aa). S138 is subject to Phosphoserine. The region spanning 157 to 261 is the IRS-type PTB domain; the sequence is EVTEFPVIVQ…ARQRERLPEL (105 aa). A Phosphoserine modification is found at S274. The tract at residues 278-299 is disordered; that stretch reads LEPPGELREVAPGFELPTPRKL. Phosphoserine is present on residues S308 and S314. Y325 is modified (phosphotyrosine). The interval 354 to 390 is disordered; it reads GLTNGGPEAQEGPPGGRSPLGSPIYHNTEDLSWPGSA. The segment covering 358–376 has biased composition (low complexity); it reads GGPEAQEGPPGGRSPLGSP. The residue at position 371 (S371) is a Phosphoserine.

It belongs to the DOK family. Type A subfamily. As to quaternary structure, on tyrosine phosphorylation, interacts with CSK and INPP5D/SHIP1 via their SH2 domains. Both Tyr-325 and Tyr-343 are required for interaction with INPP5D. Only Tyr-325 is required for interaction with CSK. Binds ABL1 through the PTB domain and in a kinase-dependent manner. Does not interact with RasGAP. Post-translationally, constitutively tyrosine-phosphorylated. On IL2 stimulation, phosphorylated on C-terminal tyrosine residues possibly by Src kinases. Can also be phosphorylated by ABL1 kinase. As to expression, predominantly expressed in bone marrow, spleen and lung. Low levels in heart, brain, liver, muscle, thymus, kidney and testis. Highly expressed in B-cells and macrophages.

It localises to the cytoplasm. The protein localises to the cell membrane. In terms of biological role, DOK proteins are enzymatically inert adaptor or scaffolding proteins. They provide a docking platform for the assembly of multimolecular signaling complexes. DOK3 is a negative regulator of JNK signaling in B-cells through interaction with INPP5D/SHIP1. May modulate ABL1 function. The protein is Docking protein 3 (Dok3) of Mus musculus (Mouse).